The sequence spans 140 residues: Large ribosomal subunit protein uL11 (140 aa).

This sequence belongs to the universal ribosomal protein uL11 family. As to quaternary structure, part of the ribosomal stalk of the 50S ribosomal subunit. Interacts with L10 and the large rRNA to form the base of the stalk. L10 forms an elongated spine to which L12 dimers bind in a sequential fashion forming a multimeric L10(L12)X complex. Post-translationally, one or more lysine residues are methylated.

In terms of biological role, forms part of the ribosomal stalk which helps the ribosome interact with GTP-bound translation factors. The protein is Large ribosomal subunit protein uL11 of Dehalococcoides mccartyi (strain ATCC BAA-2100 / JCM 16839 / KCTC 5957 / BAV1).